A 470-amino-acid chain; its full sequence is Ribulose bisphosphate carboxylase large chain (470 aa).

Substrate contacts are provided by Asn115 and Thr165. Lys167 serves as the catalytic Proton acceptor. Lys169 contributes to the substrate binding site. Lys193, Asp195, and Glu196 together coordinate Mg(2+). Lys193 bears the N6-carboxylysine mark. Residue His286 is the Proton acceptor of the active site. Arg287, His319, and Ser371 together coordinate substrate.

Belongs to the RuBisCO large chain family. Type I subfamily. In terms of assembly, heterohexadecamer of 8 large chains and 8 small chains. The cofactor is Mg(2+).

The protein localises to the carboxysome. It carries out the reaction 2 (2R)-3-phosphoglycerate + 2 H(+) = D-ribulose 1,5-bisphosphate + CO2 + H2O. The catalysed reaction is D-ribulose 1,5-bisphosphate + O2 = 2-phosphoglycolate + (2R)-3-phosphoglycerate + 2 H(+). RuBisCO catalyzes two reactions: the carboxylation of D-ribulose 1,5-bisphosphate, the primary event in carbon dioxide fixation, as well as the oxidative fragmentation of the pentose substrate in the photorespiration process. Both reactions occur simultaneously and in competition at the same active site. This chain is Ribulose bisphosphate carboxylase large chain, found in Synechococcus sp. (strain CC9902).